The following is a 229-amino-acid chain: Large ribosomal subunit protein uL1 (229 aa).

It belongs to the universal ribosomal protein uL1 family. Part of the 50S ribosomal subunit.

In terms of biological role, binds directly to 23S rRNA. The L1 stalk is quite mobile in the ribosome, and is involved in E site tRNA release. Protein L1 is also a translational repressor protein, it controls the translation of the L11 operon by binding to its mRNA. The protein is Large ribosomal subunit protein uL1 of Streptococcus pneumoniae (strain Taiwan19F-14).